Here is a 360-residue protein sequence, read N- to C-terminus: UDP-N-acetylglucosamine--N-acetylmuramyl-(pentapeptide) pyrophosphoryl-undecaprenol N-acetylglucosamine transferase (360 aa).

Residues 12-14 (TAG), Ser198, and Gln289 contribute to the UDP-N-acetyl-alpha-D-glucosamine site.

Belongs to the glycosyltransferase 28 family. MurG subfamily.

It is found in the cell membrane. The catalysed reaction is Mur2Ac(oyl-L-Ala-gamma-D-Glu-L-Lys-D-Ala-D-Ala)-di-trans,octa-cis-undecaprenyl diphosphate + UDP-N-acetyl-alpha-D-glucosamine = beta-D-GlcNAc-(1-&gt;4)-Mur2Ac(oyl-L-Ala-gamma-D-Glu-L-Lys-D-Ala-D-Ala)-di-trans,octa-cis-undecaprenyl diphosphate + UDP + H(+). The protein operates within cell wall biogenesis; peptidoglycan biosynthesis. Functionally, cell wall formation. Catalyzes the transfer of a GlcNAc subunit on undecaprenyl-pyrophosphoryl-MurNAc-pentapeptide (lipid intermediate I) to form undecaprenyl-pyrophosphoryl-MurNAc-(pentapeptide)GlcNAc (lipid intermediate II). This is UDP-N-acetylglucosamine--N-acetylmuramyl-(pentapeptide) pyrophosphoryl-undecaprenol N-acetylglucosamine transferase from Streptococcus equi subsp. zooepidemicus (strain MGCS10565).